Here is a 330-residue protein sequence, read N- to C-terminus: 4-hydroxythreonine-4-phosphate dehydrogenase (330 aa).

Substrate-binding residues include His-136 and Thr-137. 3 residues coordinate a divalent metal cation: His-166, His-211, and His-266. Positions 274, 283, and 292 each coordinate substrate.

It belongs to the PdxA family. Homodimer. Requires Zn(2+) as cofactor. Mg(2+) is required as a cofactor. Co(2+) serves as cofactor.

The protein resides in the cytoplasm. The enzyme catalyses 4-(phosphooxy)-L-threonine + NAD(+) = 3-amino-2-oxopropyl phosphate + CO2 + NADH. The protein operates within cofactor biosynthesis; pyridoxine 5'-phosphate biosynthesis; pyridoxine 5'-phosphate from D-erythrose 4-phosphate: step 4/5. Catalyzes the NAD(P)-dependent oxidation of 4-(phosphooxy)-L-threonine (HTP) into 2-amino-3-oxo-4-(phosphooxy)butyric acid which spontaneously decarboxylates to form 3-amino-2-oxopropyl phosphate (AHAP). The polypeptide is 4-hydroxythreonine-4-phosphate dehydrogenase (Erwinia tasmaniensis (strain DSM 17950 / CFBP 7177 / CIP 109463 / NCPPB 4357 / Et1/99)).